A 346-amino-acid chain; its full sequence is Phosphate acyltransferase (346 aa).

Belongs to the PlsX family. As to quaternary structure, homodimer. Probably interacts with PlsY.

Its subcellular location is the cytoplasm. The enzyme catalyses a fatty acyl-[ACP] + phosphate = an acyl phosphate + holo-[ACP]. Its pathway is lipid metabolism; phospholipid metabolism. In terms of biological role, catalyzes the reversible formation of acyl-phosphate (acyl-PO(4)) from acyl-[acyl-carrier-protein] (acyl-ACP). This enzyme utilizes acyl-ACP as fatty acyl donor, but not acyl-CoA. The polypeptide is Phosphate acyltransferase (Brucella ovis (strain ATCC 25840 / 63/290 / NCTC 10512)).